The sequence spans 466 residues: ATP-dependent protease ATPase subunit HslU (466 aa).

ATP is bound by residues Ile-18, Gly-60 to Glu-65, Asp-279, Glu-344, and Arg-416.

This sequence belongs to the ClpX chaperone family. HslU subfamily. As to quaternary structure, a double ring-shaped homohexamer of HslV is capped on each side by a ring-shaped HslU homohexamer. The assembly of the HslU/HslV complex is dependent on binding of ATP.

The protein resides in the cytoplasm. In terms of biological role, ATPase subunit of a proteasome-like degradation complex; this subunit has chaperone activity. The binding of ATP and its subsequent hydrolysis by HslU are essential for unfolding of protein substrates subsequently hydrolyzed by HslV. HslU recognizes the N-terminal part of its protein substrates and unfolds these before they are guided to HslV for hydrolysis. The chain is ATP-dependent protease ATPase subunit HslU from Lactobacillus acidophilus (strain ATCC 700396 / NCK56 / N2 / NCFM).